Consider the following 188-residue polypeptide: UPF0200 protein YG5714_1176 (188 aa).

15-22 is an ATP binding site; the sequence is GMPGSGKS.

This sequence belongs to the UPF0200 family.

This is UPF0200 protein YG5714_1176 from Saccharolobus islandicus (strain Y.G.57.14 / Yellowstone #1) (Sulfolobus islandicus).